The chain runs to 113 residues: Cell division topological specificity factor (113 aa).

The protein belongs to the MinE family.

Prevents the cell division inhibition by proteins MinC and MinD at internal division sites while permitting inhibition at polar sites. This ensures cell division at the proper site by restricting the formation of a division septum at the midpoint of the long axis of the cell. The chain is Cell division topological specificity factor from Methylobacterium radiotolerans (strain ATCC 27329 / DSM 1819 / JCM 2831 / NBRC 15690 / NCIMB 10815 / 0-1).